An 89-amino-acid polypeptide reads, in one-letter code: Small ribosomal subunit protein uS15 (89 aa).

The span at 1–21 (MVMTAEDKAQVIGEHKKHDGD) shows a compositional bias: basic and acidic residues. Positions 1–24 (MVMTAEDKAQVIGEHKKHDGDTGS) are disordered.

This sequence belongs to the universal ribosomal protein uS15 family. Part of the 30S ribosomal subunit. Forms a bridge to the 50S subunit in the 70S ribosome, contacting the 23S rRNA.

In terms of biological role, one of the primary rRNA binding proteins, it binds directly to 16S rRNA where it helps nucleate assembly of the platform of the 30S subunit by binding and bridging several RNA helices of the 16S rRNA. Forms an intersubunit bridge (bridge B4) with the 23S rRNA of the 50S subunit in the ribosome. This chain is Small ribosomal subunit protein uS15, found in Solidesulfovibrio magneticus (strain ATCC 700980 / DSM 13731 / RS-1) (Desulfovibrio magneticus).